Reading from the N-terminus, the 1147-residue chain is MQKKRSRAGAAEQEAASDDGEMSDSSDKMEVSQNKGKSGIKRAPEADDVLRPVKLSKSDLYKPPTNDELNRLKETENLFHTNLLRMQIEELLQEVKLKEKRRKTIDGFLHEINALLGTIPETPKTDLTDQSWLSSSIKVPFLQVPYQVKGKFSFLPPSSIKVVGSYLLGTCIKPEINVDLAVTMPQEILQVKDNLNQRYSRKRALYLAHIASHLTDNKLFSSVKFTYMNSNHLKPILLLRPQGKDEKLVTVRIHICPPPGFFKLSRLYPNKNNVRTSWYTEQQTETEGVCDPPTPYYNNTILSDLTLEHHLHHLTNCATDFPGMKDAIALLKVWLHQRQLDKGFGCFNGFLASMLISYLLSKNKINKVMSGYQVLRNTLQFLATTDLTVNGITMATCSDSSLPSLPDFHEAFQVVFVDPMGVVNLCADMTASKYRQIQFEASESLKVLDDTNVNGFHLLLMVPKPFVRTFDHVFHLTNVAKLQGTCKKMKLLNQLIDRGGDYLATALPYLLSVLSKGLGPRVSLLSHTLTHKPEWNVGEEPAKHKDSGLVTVGLLLDPELYTNVLDKGPAADSSEALDFRAFWGEKSELRRFQDGSICEAVVWTGGSLYDKRKVPELIVKYLLELHANIPESCINYTGNALDCVLSRGRETSTEEEKMVSIIQSYDDLSRKLWNLNDLPLTITSVQGTHPCLRYTDVFPPLPVKPDWSSYHLLREKKCLIPNPEKPCPAYVSPVKVICHMEGSGKWPQDKDAIKRLKAAFQIRLSELLSSQHQLLCNPSATHTDVYKDGYVFRVQVAYHREPQYMKEFVTPEGMLKYQDTEESMQLEMETNHLPHLSSTLHGLHQQHPAFGGTSRLAKRWIQSQLLGDSFSEECLDLLVAHLFLHPAPYSPPSSALVGFLRFLHLVATFDWKNSPLIVNLNGELKGSEYTEIQNDFISARAQLPVMFIATPKDKKDSVWTKNQPTAQMLQRLIVLCLESLRALEQQLMDPRGNHDYKMIFRPPLDLYDVLIRLNPKQISRHREAVDQPAKSFFRGMLKEGAQVKDLMFPVVGYDPIQLFLQELREAYGEFALFFHDLHGGDVIGVLWKPSSFEPQPFKTTNVKGRQMDGKSDKALLVPNAEAFVEDLEILGEGLVAGVEAQTERWNI.

Residues 1–49 (MQKKRSRAGAAEQEAASDDGEMSDSSDKMEVSQNKGKSGIKRAPEADDV) form a disordered region. Acidic residues predominate over residues 15-24 (AASDDGEMSD).

The protein belongs to the NRAP family. Part of the small subunit (SSU) processome, composed of more than 70 proteins and the RNA chaperone small nucleolar RNA (snoRNA) U3.

It is found in the nucleus. It localises to the nucleolus. Its subcellular location is the chromosome. Functionally, part of the small subunit (SSU) processome, first precursor of the small eukaryotic ribosomal subunit. During the assembly of the SSU processome in the nucleolus, many ribosome biogenesis factors, an RNA chaperone and ribosomal proteins associate with the nascent pre-rRNA and work in concert to generate RNA folding, modifications, rearrangements and cleavage as well as targeted degradation of pre-ribosomal RNA by the RNA exosome. In Xenopus laevis (African clawed frog), this protein is Nucleolar protein 6 (nol6).